Consider the following 405-residue polypeptide: Argininosuccinate synthase (405 aa).

Residues A13 to S21 and A40 each bind ATP. Residues Y91 and S96 each contribute to the L-citrulline site. Residue G121 coordinates ATP. The L-aspartate site is built by T123, N127, and D128. Residue N127 participates in L-citrulline binding. R131, S182, S191, E267, and Y279 together coordinate L-citrulline.

The protein belongs to the argininosuccinate synthase family. Type 1 subfamily. As to quaternary structure, homotetramer.

It is found in the cytoplasm. The catalysed reaction is L-citrulline + L-aspartate + ATP = 2-(N(omega)-L-arginino)succinate + AMP + diphosphate + H(+). The protein operates within amino-acid biosynthesis; L-arginine biosynthesis; L-arginine from L-ornithine and carbamoyl phosphate: step 2/3. This Rhizobium meliloti (strain 1021) (Ensifer meliloti) protein is Argininosuccinate synthase.